An 816-amino-acid polypeptide reads, in one-letter code: Lon protease (816 aa).

The Lon N-terminal domain occupies 40–244 (VPLIAVPSHP…KVLELLYEEL (205 aa)). 398–405 (GPPGVGKT) serves as a coordination point for ATP. Positions 636–816 (AMSPGMVMGL…SMKEVIKLLF (181 aa)) constitute a Lon proteolytic domain. Active-site residues include serine 724 and lysine 767.

The protein belongs to the peptidase S16 family. As to quaternary structure, homohexamer. Organized in a ring with a central cavity.

Its subcellular location is the cytoplasm. It catalyses the reaction Hydrolysis of proteins in presence of ATP.. ATP-dependent serine protease that mediates the selective degradation of mutant and abnormal proteins as well as certain short-lived regulatory proteins. Required for cellular homeostasis and for survival from DNA damage and developmental changes induced by stress. Degrades polypeptides processively to yield small peptide fragments that are 5 to 10 amino acids long. Binds to DNA in a double-stranded, site-specific manner. In Borrelia duttonii (strain Ly), this protein is Lon protease.